The sequence spans 389 residues: UDP-N-acetylglucosamine--N-acetylmuramyl-(pentapeptide) pyrophosphoryl-undecaprenol N-acetylglucosamine transferase (389 aa).

UDP-N-acetyl-alpha-D-glucosamine contacts are provided by residues Thr39 to Gly41, Asn157, Arg193, Ser221, Ile275, Ala294 to Glu299, and Gln320.

Belongs to the glycosyltransferase 28 family. MurG subfamily.

Its subcellular location is the cell inner membrane. The enzyme catalyses di-trans,octa-cis-undecaprenyl diphospho-N-acetyl-alpha-D-muramoyl-L-alanyl-D-glutamyl-meso-2,6-diaminopimeloyl-D-alanyl-D-alanine + UDP-N-acetyl-alpha-D-glucosamine = di-trans,octa-cis-undecaprenyl diphospho-[N-acetyl-alpha-D-glucosaminyl-(1-&gt;4)]-N-acetyl-alpha-D-muramoyl-L-alanyl-D-glutamyl-meso-2,6-diaminopimeloyl-D-alanyl-D-alanine + UDP + H(+). It functions in the pathway cell wall biogenesis; peptidoglycan biosynthesis. Cell wall formation. Catalyzes the transfer of a GlcNAc subunit on undecaprenyl-pyrophosphoryl-MurNAc-pentapeptide (lipid intermediate I) to form undecaprenyl-pyrophosphoryl-MurNAc-(pentapeptide)GlcNAc (lipid intermediate II). The chain is UDP-N-acetylglucosamine--N-acetylmuramyl-(pentapeptide) pyrophosphoryl-undecaprenol N-acetylglucosamine transferase from Saccharophagus degradans (strain 2-40 / ATCC 43961 / DSM 17024).